Reading from the N-terminus, the 369-residue chain is Ribonuclease D (369 aa).

Residues 4–168 (EIITTTAQLH…CLEKLQQQLE (165 aa)) form the 3'-5' exonuclease domain. An HRDC domain is found at 207–286 (DRQGLAIIKA…TQVISQDEST (80 aa)).

This sequence belongs to the RNase D family. Requires a divalent metal cation as cofactor.

It localises to the cytoplasm. It catalyses the reaction Exonucleolytic cleavage that removes extra residues from the 3'-terminus of tRNA to produce 5'-mononucleotides.. In terms of biological role, exonuclease involved in the 3' processing of various precursor tRNAs. Initiates hydrolysis at the 3'-terminus of an RNA molecule and releases 5'-mononucleotides. This chain is Ribonuclease D, found in Psychromonas ingrahamii (strain DSM 17664 / CCUG 51855 / 37).